A 290-amino-acid polypeptide reads, in one-letter code: Polyamine aminopropyltransferase (290 aa).

Positions 5–238 constitute a PABS domain; it reads QLWYEKLHSS…GIMTFAWASE (234 aa). S-methyl-5'-thioadenosine is bound at residue Gln-33. 2 residues coordinate spermidine: His-64 and Asp-88. Residues Glu-108 and 140 to 141 each bind S-methyl-5'-thioadenosine; that span reads DG. The active-site Proton acceptor is Asp-158. Residue 158–161 coordinates spermidine; it reads DSTD. Pro-165 is an S-methyl-5'-thioadenosine binding site.

It belongs to the spermidine/spermine synthase family. Homodimer or homotetramer.

Its subcellular location is the cytoplasm. It catalyses the reaction S-adenosyl 3-(methylsulfanyl)propylamine + putrescine = S-methyl-5'-thioadenosine + spermidine + H(+). It functions in the pathway amine and polyamine biosynthesis; spermidine biosynthesis; spermidine from putrescine: step 1/1. Catalyzes the irreversible transfer of a propylamine group from the amino donor S-adenosylmethioninamine (decarboxy-AdoMet) to putrescine (1,4-diaminobutane) to yield spermidine. The chain is Polyamine aminopropyltransferase from Hamiltonella defensa subsp. Acyrthosiphon pisum (strain 5AT).